The primary structure comprises 639 residues: Protein artemis (639 aa).

Disordered regions lie at residues 450–496 (MDCT…LTSS), 515–570 (SELE…SQVD), and 590–617 (EAAE…VPQP). The segment covering 454 to 466 (ESNDDDDDEDDAA) has biased composition (acidic residues). Residues 518 to 537 (ENSQNTQTLSTENTASQSPE) show a composition bias toward polar residues. Residues 548-560 (VHMSSSQSTHISD) are compositionally biased toward low complexity.

The protein belongs to the DNA repair metallo-beta-lactamase (DRMBL) family.

It localises to the nucleus. Functionally, may have a role in the processing of DNA double strand breaks (DSBs) prior to their repair by the non homologous end joining (NHEJ) pathway. Probably exhibits both exonuclease and endonuclease activity. The polypeptide is Protein artemis (dclre1c) (Danio rerio (Zebrafish)).